We begin with the raw amino-acid sequence, 276 residues long: Cis-2,3-dihydrobiphenyl-2,3-diol dehydrogenase (276 aa).

9-33 lines the NAD(+) pocket; the sequence is LVTGGGSGLGRAIVDRFVAEGARVA. Substrate is bound at residue S142. The Proton acceptor role is filled by Y155.

This sequence belongs to the short-chain dehydrogenases/reductases (SDR) family.

The enzyme catalyses (2R,3S)-3-phenylcyclohexa-3,5-diene-1,2-diol + NAD(+) = biphenyl-2,3-diol + NADH + H(+). It functions in the pathway xenobiotic degradation; biphenyl degradation; 2-hydroxy-2,4-pentadienoate and benzoate from biphenyl: step 2/4. The protein is Cis-2,3-dihydrobiphenyl-2,3-diol dehydrogenase (bphB) of Pseudomonas sp. (strain KKS102).